Consider the following 154-residue polypeptide: MDKANTNRSKVCGGSGEAKLTGKKRKNVSAKQSKKDAKKENSQMLKWSSKDEVLVLQGMLDFKSVTGKNPVDDINGAYEFVVHEYISTVIDEDFIEKMKSLKKKLKKKQRIYDKDPSSSEPLYQKSSEWLKMIWGYDVESALEKPRKSKRIIKL.

Residues 1–44 form a disordered region; sequence MDKANTNRSKVCGGSGEAKLTGKKRKNVSAKQSKKDAKKENSQM.

The protein belongs to the GeBP family.

The sequence is that of Probable transcription factor At4g00232 from Arabidopsis thaliana (Mouse-ear cress).